Here is a 237-residue protein sequence, read N- to C-terminus: Large ribosomal subunit protein uL1 (237 aa).

Belongs to the universal ribosomal protein uL1 family. As to quaternary structure, part of the 50S ribosomal subunit.

Its function is as follows. Binds directly to 23S rRNA. The L1 stalk is quite mobile in the ribosome, and is involved in E site tRNA release. In terms of biological role, protein L1 is also a translational repressor protein, it controls the translation of the L11 operon by binding to its mRNA. The chain is Large ribosomal subunit protein uL1 from Synechococcus elongatus (strain ATCC 33912 / PCC 7942 / FACHB-805) (Anacystis nidulans R2).